Consider the following 574-residue polypeptide: Membralin (574 aa).

The tract at residues 1–27 is disordered; it reads MSEHAAAPGPGPNGGGGGGAAPVRGPR. Serine 2 is modified (N-acetylserine). Residues 69–89 form a helical membrane-spanning segment; that stretch reads FFVLLKALFVLFVLAYIHIVF. N-linked (GlcNAc...) asparagine glycosylation is present at asparagine 180. 3 helical membrane-spanning segments follow: residues 293 to 313, 337 to 357, and 417 to 437; these read TSYL…SMLL, IAFP…MEAI, and YSSL…IYFF. 2 stretches are compositionally biased toward low complexity: residues 461–470 and 491–501; these read LGPGTPTALP and LGPSSSPAPTG. Disordered regions lie at residues 461 to 515 and 546 to 574; these read LGPG…GASV and RRPT…PAGS.

It belongs to the membralin family. Interacts with ERLIN2. Detected in brain, spinal cord, lung, liver and kidney.

The protein resides in the endoplasmic reticulum membrane. May have a role in the ERAD pathway required for clearance of misfolded proteins in the endoplasmic reticulum (ER). Promotes survival of motor neurons, probably by protecting against ER stress. In Mus musculus (Mouse), this protein is Membralin (Tmem259).